A 427-amino-acid polypeptide reads, in one-letter code: MTIPTEISCPEEDAFQLLDKFSWFPSDDQRRWWEYTGPYLLKLLRDAKYPQKDQVPCLYLLQQLLVPYLGTFPVVGQAPLPWWSNVTTYGVPFELSWNLLHNIVRIGFEPLSHLAESGVDAFNKTAPEECVSRLACLDNTIDLARFRHFQHHLLVTPEEETWLLREKAPLPKSGRGQQTLAVEFQNGGISAKAYFFPGMKSLATGLSPGKLILDSIERLALPGLKEPVHHLRSTLGLQDDGHPTDTAIAPFLLGVDLCTPERSRLKFYVTDQVVSWDRVADMWTLRGKRLEDPQCADGLALLRKLWDLLAIPEGYRSNIRPDFAFGTPPPEDYRPVMMANWTLSPKKKFPDPQIYLLTVGMNDAVVMDALVAFYEVLGWTDLASTYKDKVASYFPGPDFTKTNYIHSGVSFSYRHSKPYLSVYYSPF.

Glu-94 is a binding site for substrate. Arg-105, Lys-192, Tyr-194, Tyr-268, Gln-353, Tyr-355, Tyr-419, and Tyr-423 together coordinate dimethylallyl diphosphate.

It belongs to the tryptophan dimethylallyltransferase family.

The enzyme catalyses 12alpha,13alpha-dihydroxyfumitremorgin C + dimethylallyl diphosphate = fumitremorgin B + diphosphate. The protein operates within mycotoxin biosynthesis. In terms of biological role, 12-alpha,13-alpha-dihydroxyfumitremorgin C prenyltransferase; part of the gene cluster that mediates the biosynthesis of fumitremorgins, indole alkaloids that carry not only intriguing chemical structures, but also interesting biological and pharmacological activities. The biosynthesis of fumitremorgin-type alkaloids begins by condensation of the two amino acids L-tryptophan and L-proline to brevianamide F, catalyzed by the non-ribosomal peptide synthetase ftmA. Brevianamide F is then prenylated by the prenyltransferase ftmPT1/ftmB in the presence of dimethylallyl diphosphate, resulting in the formation of tryprostatin B. The three cytochrome P450 monooxygenases, ftmP450-1/ftmC, ftmP450-2/ftmE and ftmP450-3/FtmG, are responsible for the conversion of tryprostatin B to 6-hydroxytryprostatin B, tryprostatin A to fumitremorgin C and fumitremorgin C to 12,13-dihydroxyfumitremorgin C, respectively. The putative methyltransferase ftmMT/ftmD is expected for the conversion of 6-hydroxytryprostatin B to tryprostatin A. FtmPT2/FtmH catalyzes the prenylation of 12,13-dihydroxyfumitre-morgin C in the presence of dimethylallyl diphosphate, resulting in the formation of fumitremorgin B. Fumitremorgin B is further converted to verruculogen by ftmOx1/ftmF via the insertion of an endoperoxide bond between the two prenyl moieties. In some fungal species, verruculogen is further converted to fumitremorgin A, but the enzymes involved in this step have not been identified yet. The protein is 12-alpha,13-alpha-dihydroxyfumitremorgin C prenyltransferase of Aspergillus fumigatus (Neosartorya fumigata).